We begin with the raw amino-acid sequence, 113 residues long: Protein USP1 (113 aa).

An N-terminal signal peptide occupies residues 1–18 (MKITMLFAALSAASGAFA). A run of 6 repeats spans residues 32-37 (IGAGVG), 40-45 (IGAGVG), 46-49 (PYGY), 50-53 (PYGA), 59-65 (LQLLPLR), and 69-75 (LQWIPLR). A 2 X 6 AA repeats region spans residues 32 to 45 (IGAGVGIGIGAGVG). Residues 46 to 53 (PYGYPYGA) form a 2 X 4 AA approximate tandem repeats region. The 2 X 7 AA approximate repeats stretch occupies residues 59 to 75 (LQLLPLRWLSLQWIPLR).

It is found in the secreted. This is Protein USP1 (USP1) from Puccinia graminis (Black stem rust fungus).